The following is a 265-amino-acid chain: Small ribosomal subunit protein uS2 (265 aa).

It belongs to the universal ribosomal protein uS2 family.

This chain is Small ribosomal subunit protein uS2, found in Microcystis aeruginosa (strain NIES-843 / IAM M-2473).